Here is a 557-residue protein sequence, read N- to C-terminus: NAD(P)H-quinone oxidoreductase chain 4 (557 aa).

A run of 14 helical transmembrane segments spans residues 25–45 (FPWLSLSILFPIAGSLLVPFI), 57–77 (YALFIALTTFLITVGAYLKGF), 111–131 (LILLTSFITALAVLAAWPVSF), 133–153 (PKLFFFLILAMDGGQIAVFAV), 157–177 (LLFFLAWELELLPVYLLLAIW), 189–209 (FIIYTAGSSLFILLAGLAMGF), 230–250 (GFQLLCYGGLLIAFGVKLPIV), 264–284 (TAPVHMLLAGILLKMGGYALL), 298–318 (FAPLLIVLGVVNIIYAALTSF), 327–347 (IAYSSISHMGFVLIGIGSFST), 353–373 (AMLQMISHGLIGASLFFLVGA), 397–417 (FALWTVCSLASLALPGMSGFV), 438–458 (IVIAGLAAIGVILTPIYLLSM), and 485–505 (IYIIGSLLVPIIGIGLYPRIM).

The protein belongs to the complex I subunit 4 family.

The protein localises to the cellular thylakoid membrane. The catalysed reaction is a plastoquinone + NADH + (n+1) H(+)(in) = a plastoquinol + NAD(+) + n H(+)(out). The enzyme catalyses a plastoquinone + NADPH + (n+1) H(+)(in) = a plastoquinol + NADP(+) + n H(+)(out). Functionally, NDH-1 shuttles electrons from NAD(P)H, via FMN and iron-sulfur (Fe-S) centers, to quinones in the respiratory chain. The immediate electron acceptor for the enzyme in this species is believed to be plastoquinone. Couples the redox reaction to proton translocation (for every two electrons transferred, four hydrogen ions are translocated across the cytoplasmic membrane), and thus conserves the redox energy in a proton gradient. The polypeptide is NAD(P)H-quinone oxidoreductase chain 4 (Prochlorococcus marinus (strain SARG / CCMP1375 / SS120)).